We begin with the raw amino-acid sequence, 63 residues long: Large ribosomal subunit protein uL29 (63 aa).

Belongs to the universal ribosomal protein uL29 family.

The sequence is that of Large ribosomal subunit protein uL29 from Shigella flexneri.